The following is a 311-amino-acid chain: Pyrimidine-specific ribonucleoside hydrolase RihA (311 aa).

H240 is a catalytic residue.

Belongs to the IUNH family. RihA subfamily.

Functionally, hydrolyzes with equal efficiency cytidine or uridine to ribose and cytosine or uracil, respectively. This Escherichia coli O139:H28 (strain E24377A / ETEC) protein is Pyrimidine-specific ribonucleoside hydrolase RihA.